The sequence spans 33 residues: Mu-theraphotoxin-Os1a (33 aa).

3 disulfides stabilise this stretch: C2/C17, C9/C22, and C16/C29. L33 carries the post-translational modification Leucine amide.

Belongs to the neurotoxin 10 (Hwtx-1) family. 14 (Hntx-1) subfamily. Monomer. As to expression, expressed by the venom gland.

It is found in the secreted. Its function is as follows. Potently and reversibly inhibits some human voltage-gated sodium channels (Nav1.1/SCN1A (IC(50)=72.0 nM), Nav1.2/SCN2A (IC(50)=75.5 nM), Nav1.6/SCN8A (IC(50)=115.0 nM), Nav1.7/SCN9A (IC(50)=52.7-129.5 nM), Nav1.3/SCN3A (IC(50)=306.6 nM)). The hNav1.7/SCN9A channel inhibition occurs without any change in steady-state inactivation- and conductance-voltage relationships. On adult mouse DRG neurons, this toxin is approximately 1000-fold more efficient to inhibit tetrodotoxin (TTX)-sensitive than TTX-resistant sodium currents. In vivo, this toxin exhibits analgesic effects in mice pain models. The protein is Mu-theraphotoxin-Os1a of Omothymus schioedtei (Malaysian earth tiger tarantula).